A 321-amino-acid polypeptide reads, in one-letter code: MLRFTGARAIRKYSTRYALEHLKEGAPLKGLFSIEGLQKAWFDRVKYLDAKLNDCTNEAQQKPLETLIHENSKSASKKHIVNYASSLYNLKFSMSSLQGCIRTPPEECPRLGPEALLQTPDFNRTISNEPLTTGNERLQAALISSFGSLMEFRTLLINSNLAISGDGFTWLVARRQLDKRAMRNDMPNRDIEYDKLFILNTYNAGTPFNFSTSGVMNELNNQYTNMEKQRAKEAGNLEDSEMTAKQAKTKFIYETQQKGFSGKEVSYIPLLAIDASPKTWLTDYGVFGKREYLERVWDSIEWKIVESRLPQRTKIQAFNTL.

The N-terminal 13 residues, 1 to 13 (MLRFTGARAIRKY), are a transit peptide targeting the mitochondrion.

The protein belongs to the mitochondrion-specific ribosomal protein mS43 family. Component of the mitochondrial small ribosomal subunit (mt-SSU). Mature yeast 74S mitochondrial ribosomes consist of a small (37S) and a large (54S) subunit. The 37S small subunit contains a 15S ribosomal RNA (15S mt-rRNA) and 34 different proteins. The 54S large subunit contains a 21S rRNA (21S mt-rRNA) and 46 different proteins. mS43 forms a heterodimer with mS42, building a large protuberance adjacent to the mRNA channel exit in the mt-SSU body.

It localises to the mitochondrion. Functionally, component of the mitochondrial ribosome (mitoribosome), a dedicated translation machinery responsible for the synthesis of mitochondrial genome-encoded proteins, including at least some of the essential transmembrane subunits of the mitochondrial respiratory chain. The mitoribosomes are attached to the mitochondrial inner membrane and translation products are cotranslationally integrated into the membrane. In Saccharomyces cerevisiae (strain ATCC 204508 / S288c) (Baker's yeast), this protein is Small ribosomal subunit protein mS43 (MRP1).